The primary structure comprises 748 residues: Disintegrin and metalloproteinase domain-containing protein 10 (748 aa).

Positions 1–19 (MVLLRVLILLLSWAAGMGG) are cleaved as a signal peptide. Positions 20 to 213 (QYGNPLNKYI…NGPELLRKKR (194 aa)) are excised as a propeptide. Topologically, residues 20–672 (QYGNPLNKYI…SPELYENIAE (653 aa)) are extracellular. The Cysteine switch signature appears at 171–178 (GGCADHSV). Residue cysteine 173 participates in Zn(2+) binding. The region spanning 220–456 (NTCQLYIQTD…KRNNCFVESG (237 aa)) is the Peptidase M12B domain. 17 disulfides stabilise this stretch: cysteine 222-cysteine 313, cysteine 344-cysteine 451, cysteine 399-cysteine 435, cysteine 460-cysteine 495, cysteine 471-cysteine 484, cysteine 473-cysteine 479, cysteine 483-cysteine 515, cysteine 503-cysteine 511, cysteine 510-cysteine 536, cysteine 524-cysteine 543, cysteine 530-cysteine 562, cysteine 555-cysteine 567, cysteine 572-cysteine 598, cysteine 580-cysteine 607, cysteine 582-cysteine 597, cysteine 594-cysteine 639, and cysteine 632-cysteine 645. Asparagine 267 and asparagine 278 each carry an N-linked (GlcNAc...) asparagine glycan. Histidine 383 is a Zn(2+) binding site. Glutamate 384 is an active-site residue. Zn(2+)-binding residues include histidine 387 and histidine 393. The N-linked (GlcNAc...) asparagine glycan is linked to asparagine 439. Residues 457–551 (QPICGNGMVE…LCPASDPKPN (95 aa)) form the Disintegrin domain. N-linked (GlcNAc...) asparagine glycosylation is present at asparagine 551. A helical membrane pass occupies residues 673–693 (WIVAHWWAVLLMGIALIMLMA). Over 694 to 748 (GFIKICSVHTPSSNPKLPPPKPLPGTLKRRRPPQPIQQPQRQRPRESYQMGHMRR) the chain is Cytoplasmic. Positions 704-748 (PSSNPKLPPPKPLPGTLKRRRPPQPIQQPQRQRPRESYQMGHMRR) are disordered. An SH3-binding motif is present at residues 708-715 (PKLPPPKP). Threonine 719 carries the post-translational modification Phosphothreonine; by FAM20C. An SH3-binding motif is present at residues 722–728 (RRRPPQP). Residues 734–748 (RQRPRESYQMGHMRR) form an interaction with AP2A1, AP2A2 and AP2M1 region.

Forms a ternary EFNA5-EPHA3-ADAM10 complex mediating EFNA5 extracellular domain shedding by ADAM10 which regulates the EFNA5-EPHA3 complex internalization and function, the cleavage occurs in trans, with ADAM10 and its substrate being on the membranes of opposing cells. Interacts with the clathrin adapter AP2 complex subunits AP2A1, AP2A2, AP2B1, and AP2M1; this interaction facilitates ADAM10 endocytosis from the plasma membrane during long-term potentiation in hippocampal neurons. Forms a ternary complex composed of ADAM10, EPHA4 and CADH1; within the complex, ADAM10 cleaves CADH1 which disrupts adherens junctions. Interacts with EPHA2. Interacts with NGF in a divalent cation-dependent manner. Interacts with TSPAN14; the interaction promotes ADAM10 maturation and cell surface expression. Interacts with TSPAN5, TSPAN10, TSPAN14, TSPAN15, TSPAN17 and TSPAN33; these interactions regulate ADAM10 substrate specificity, endocytosis and turnover. Interacts (via extracellular domain) with TSPAN33 (via extracellular domain) and (via cytoplasmic domain) with AFDN; interaction with TSPAN33 allows the docking of ADAM10 to zonula adherens through a PDZ11-dependent interaction between TSPAN33 and PLEKHA7 while interaction with AFDN locks ADAM10 at zonula adherens. Interacts with DLG1; this interaction recruits ADAM10 to the cell membrane during long-term depression in hippocampal neurons. Interacts (via extracellular domain) with BACE1 (via extracellular domain). Interacts with FAM171A1. As to quaternary structure, (Microbial infection) Interacts with S.aureus hly; this interaction is necessary for toxin pore formation, disruption of focal adhesions and S.aureus hly-mediated cytotoxicity. The cofactor is Zn(2+). In terms of processing, the precursor is cleaved by furin and PCSK7. As to expression, expressed in the brain (at protein level). Expressed in spleen, lymph node, thymus, peripheral blood leukocyte, bone marrow, cartilage, chondrocytes and fetal liver.

The protein localises to the cell membrane. The protein resides in the golgi apparatus membrane. Its subcellular location is the cytoplasmic vesicle. It is found in the clathrin-coated vesicle. It localises to the cell projection. The protein localises to the axon. The protein resides in the dendrite. Its subcellular location is the cell junction. It is found in the adherens junction. It localises to the cytoplasm. It catalyses the reaction Endopeptidase of broad specificity.. With respect to regulation, catalytically inactive when the propeptide is intact and associated with the mature enzyme. The disintegrin and cysteine-rich regions modulate access of substrates to exerts an inhibitory effect on the cleavage of ADAM10 substrates. Functionally, transmembrane metalloprotease which mediates the ectodomain shedding of a myriad of transmembrane proteins, including adhesion proteins, growth factor precursors and cytokines being essential for development and tissue homeostasis. Associates with six members of the tetraspanin superfamily TspanC8 which regulate its exit from the endoplasmic reticulum and its substrate selectivity. Cleaves the membrane-bound precursor of TNF-alpha at '76-Ala-|-Val-77' to its mature soluble form. Responsible for the proteolytical release of soluble JAM3 from endothelial cells surface. Responsible for the proteolytic release of several other cell-surface proteins, including heparin-binding epidermal growth-like factor, ephrin-A2, CD44, CDH2 and for constitutive and regulated alpha-secretase cleavage of amyloid precursor protein (APP). Contributes to the normal cleavage of the cellular prion protein. Involved in the cleavage of the adhesion molecule L1 at the cell surface and in released membrane vesicles, suggesting a vesicle-based protease activity. Also controls the proteolytic processing of Notch and mediates lateral inhibition during neurogenesis. Required for the development of type 1 transitional B cells into marginal zone B cells, probably by cleaving Notch. Responsible for the FasL ectodomain shedding and for the generation of the remnant ADAM10-processed FasL (FasL APL) transmembrane form. Also cleaves the ectodomain of the integral membrane proteins CORIN and ITM2B. Mediates the proteolytic cleavage of LAG3, leading to release the secreted form of LAG3. Mediates the proteolytic cleavage of IL6R and IL11RA, leading to the release of secreted forms of IL6R and IL11RA. Enhances the cleavage of CHL1 by BACE1. Cleaves NRCAM. Cleaves TREM2, resulting in shedding of the TREM2 ectodomain. Involved in the development and maturation of glomerular and coronary vasculature. During development of the cochlear organ of Corti, promotes pillar cell separation by forming a ternary complex with CADH1 and EPHA4 and cleaving CADH1 at adherens junctions. May regulate the EFNA5-EPHA3 signaling. Regulates leukocyte transmigration as a sheddase for the adherens junction protein VE-cadherin/CDH5 in endothelial cells. In terms of biological role, (Microbial infection) Promotes the cytotoxic activity of S.aureus hly by binding to the toxin at zonula adherens and promoting formation of toxin pores. The protein is Disintegrin and metalloproteinase domain-containing protein 10 of Homo sapiens (Human).